Reading from the N-terminus, the 472-residue chain is WD repeat-containing protein 88 (472 aa).

The tract at residues 1-22 (MASPPRCSPTAHDRECKLPPPS) is disordered. WD repeat units lie at residues 100 to 139 (GHEHAVSTCHFCVDDTKLLSGSYDCTVKLWDPVDGSVVRD), 143 to 182 (RPKAPVVECSITGDSSRVIAASYDKTVRAWDLETGKLLWK), 184 to 224 (RYDT…TVSV), 228 to 267 (HHTRSITSCCFDPDSQRVASVSLDRCIKIWDVTSQATLLT), 271 to 310 (AHSNAISNCCFTFSGHFLCTSSWDKNLKIWNVHTGEFRNC), 319 to 358 (GHEGSVSSCHFARDSSFLISGGFDRTVAIWDVAEGYRKLS), and 361 to 400 (GHNDWVMDVAISNNKKWILSASKDRTMRLWNIEEIDEIPL). The disordered stretch occupies residues 447 to 472 (LPADTSSSSSSSERENSPPPRGSKDD). Basic and acidic residues predominate over residues 458–472 (SERENSPPPRGSKDD).

This is WD repeat-containing protein 88 (WDR88) from Homo sapiens (Human).